The chain runs to 175 residues: Cytochrome c homolog (175 aa).

Residues 1–8 are Cytoplasmic-facing; the sequence is MSGKELNK. The chain crosses the membrane as a helical; Signal-anchor span at residues 9-29; the sequence is IVAAILFASLIAMMVGFVANI. The Periplasmic portion of the chain corresponds to 30-175; it reads LYKPTLELQH…LFLKTYVHDK (146 aa). Positions 84, 87, 88, and 150 each coordinate heme c.

The protein belongs to the cytochrome c family. In terms of processing, binds 1 heme c group covalently per subunit.

The protein resides in the cell membrane. Functionally, may be involved in electron transfer from bc1 complex to aa3. The sequence is that of Cytochrome c homolog (cycM) from Rickettsia conorii (strain ATCC VR-613 / Malish 7).